A 612-amino-acid chain; its full sequence is Netrin unc-6 (612 aa).

The first 21 residues, 1–21 (MITSVLRYVLALYFCMGIAHG), serve as a signal peptide directing secretion. Residues 43–290 (RPVRCVPEFI…SMGELAVGGR (248 aa)) form the Laminin N-terminal domain. Residues N114, N128, and N268 are each glycosylated (N-linked (GlcNAc...) asparagine). The cysteines at positions 117 and 149 are disulfide-linked. 14 disulfides stabilise this stretch: C291/C300, C293/C310, C312/C321, C324/C344, C347/C356, C349/C374, C377/C386, C389/C407, C410/C422, C412/C429, C431/C440, C443/C457, C478/C547, and C494/C604. Laminin EGF-like domains lie at 291-346 (CKCN…SCVA), 347-409 (CNCN…ACKS), and 410-459 (CGCH…PCIK). N368 carries N-linked (GlcNAc...) asparagine glycosylation. The N-linked (GlcNAc...) asparagine glycan is linked to N423. In terms of domain architecture, NTR spans 478 to 604 (CSKCRIVPKR…FSKKDKLGQC (127 aa)). N-linked (GlcNAc...) asparagine glycosylation occurs at N564.

Binds to unc-5 and unc-40 receptors.

The protein resides in the secreted. It is found in the extracellular space. The protein localises to the extracellular matrix. It localises to the basement membrane. Component of an extracellular matrix cue that guides dorsoventral migrations on the epidermis. Required for the guidance of pioneer axons and migrating cells along the body wall. In particular, it is required for the guidance of axons from neurons, including SubL neurons and AIY interneurons, into the nerve ring. During gonad morphogenesis, involved in distal tip cell (DTC) migration from the dorsal side of the hermaphrodite body to the midbody to allow for formation of gonad arms. Its association with either unc-40 or unc-5 receptors will lead to axon attraction or repulsion, respectively. Involved in dendritic morphogenesis; may act by association with unc-40 at the tips of growing dendrites for interaction with unc-5 on the apposing branch to induce mutual repulsion. Involved in the positioning of ray 1, the most anterior ray sensilium, in the male tail. Required for the formation of synapses between the AVA interneurons and the PHB sensory neurons. This chain is Netrin unc-6, found in Caenorhabditis elegans.